The following is a 108-amino-acid chain: U-scoloptoxin(16)-Er10a (108 aa).

Positions methionine 1–serine 24 are cleaved as a signal peptide.

Belongs to the scoloptoxin-16 family. In terms of processing, contains 4 disulfide bonds. Expressed by the venom gland.

It is found in the secreted. This chain is U-scoloptoxin(16)-Er10a, found in Ethmostigmus rubripes (Giant centipede).